The following is a 238-amino-acid chain: Succinate dehydrogenase iron-sulfur subunit (238 aa).

Residues 8–97 (YRYNPDVDDA…KIVIRPLPGL (90 aa)) form the 2Fe-2S ferredoxin-type domain. Cysteine 55, cysteine 60, and cysteine 75 together coordinate [2Fe-2S] cluster. Residues 139-169 (QREKLDGLYECILCACCSTSCPSFWWNPDKF) form the 4Fe-4S ferredoxin-type domain. [4Fe-4S] cluster-binding residues include cysteine 149, cysteine 152, and cysteine 155. Residue cysteine 159 participates in [3Fe-4S] cluster binding. Residue tryptophan 164 participates in a ubiquinone binding. The [3Fe-4S] cluster site is built by cysteine 206 and cysteine 212. Cysteine 216 contributes to the [4Fe-4S] cluster binding site.

It belongs to the succinate dehydrogenase/fumarate reductase iron-sulfur protein family. Part of an enzyme complex containing four subunits: a flavoprotein, an iron-sulfur, cytochrome b-556, and a hydrophobic anchor protein. The complex forms trimers. [2Fe-2S] cluster serves as cofactor. [3Fe-4S] cluster is required as a cofactor. The cofactor is [4Fe-4S] cluster.

It is found in the cell inner membrane. It catalyses the reaction a quinone + succinate = fumarate + a quinol. It participates in carbohydrate metabolism; tricarboxylic acid cycle; fumarate from succinate (bacterial route): step 1/1. Functionally, two distinct, membrane-bound, FAD-containing enzymes are responsible for the catalysis of fumarate and succinate interconversion; the fumarate reductase is used in anaerobic growth, and the succinate dehydrogenase is used in aerobic growth. The polypeptide is Succinate dehydrogenase iron-sulfur subunit (sdhB) (Escherichia coli (strain K12)).